The primary structure comprises 347 residues: NADH-ubiquinone oxidoreductase chain 2 (347 aa).

Helical transmembrane passes span 3 to 23, 25 to 45, 59 to 79, 96 to 116, 148 to 170, 178 to 198, 200 to 220, 247 to 267, 276 to 296, and 326 to 346; these read PLIL…VMMS, HWLM…PLLM, YFLT…INLL, IIMT…FWVP, GINL…WGGL, ILAY…AFNP, MTLL…MLFM, IMLS…WMII, ITLA…YMRL, and LPML…ITLL.

This sequence belongs to the complex I subunit 2 family. As to quaternary structure, core subunit of respiratory chain NADH dehydrogenase (Complex I) which is composed of 45 different subunits. Interacts with TMEM242.

It is found in the mitochondrion inner membrane. It catalyses the reaction a ubiquinone + NADH + 5 H(+)(in) = a ubiquinol + NAD(+) + 4 H(+)(out). Functionally, core subunit of the mitochondrial membrane respiratory chain NADH dehydrogenase (Complex I) which catalyzes electron transfer from NADH through the respiratory chain, using ubiquinone as an electron acceptor. Essential for the catalytic activity and assembly of complex I. The sequence is that of NADH-ubiquinone oxidoreductase chain 2 from Saccopteryx leptura (Lesser sac-winged bat).